Here is a 447-residue protein sequence, read N- to C-terminus: N-succinylarginine dihydrolase (447 aa).

Residues 19-28 (AGLSFGNEAS), asparagine 110, and 137-138 (HR) contribute to the substrate site. Glutamate 174 is a catalytic residue. Arginine 212 serves as a coordination point for substrate. Histidine 248 is an active-site residue. Substrate-binding residues include aspartate 250 and asparagine 359. Cysteine 365 (nucleophile) is an active-site residue.

This sequence belongs to the succinylarginine dihydrolase family. In terms of assembly, homodimer.

The catalysed reaction is N(2)-succinyl-L-arginine + 2 H2O + 2 H(+) = N(2)-succinyl-L-ornithine + 2 NH4(+) + CO2. The protein operates within amino-acid degradation; L-arginine degradation via AST pathway; L-glutamate and succinate from L-arginine: step 2/5. In terms of biological role, catalyzes the hydrolysis of N(2)-succinylarginine into N(2)-succinylornithine, ammonia and CO(2). This is N-succinylarginine dihydrolase from Escherichia coli (strain SE11).